A 440-amino-acid chain; its full sequence is Acetylornithine deacetylase (440 aa).

His101 is a Zn(2+) binding site. Asp103 is a catalytic residue. Asp133 is a binding site for Zn(2+). The Proton acceptor role is filled by Glu167. Zn(2+) is bound by residues Glu168 and His412.

The protein belongs to the peptidase M20A family. ArgE subfamily. Homodimer. Requires Zn(2+) as cofactor. The cofactor is Co(2+).

It catalyses the reaction N(2)-acetyl-L-ornithine + H2O = L-ornithine + acetate. Its pathway is amino-acid biosynthesis; L-arginine biosynthesis; L-ornithine from N(2)-acetyl-L-ornithine (linear): step 1/1. The chain is Acetylornithine deacetylase from Arabidopsis thaliana (Mouse-ear cress).